The primary structure comprises 462 residues: tRNA wybutosine-synthesizing protein 2 (462 aa).

Residues Ser-257, Lys-264, and 305–306 (EL) contribute to the S-adenosyl-L-methionine site.

Belongs to the class I-like SAM-binding methyltransferase superfamily. TRM5/TYW2 family.

The protein localises to the cytoplasm. The enzyme catalyses 4-demethylwyosine(37) in tRNA(Phe) + S-adenosyl-L-methionine = 4-demethyl-7-[(3S)-3-amino-3-carboxypropyl]wyosine(37) in tRNA(Phe) + S-methyl-5'-thioadenosine + H(+). The protein operates within tRNA modification; wybutosine-tRNA(Phe) biosynthesis. In terms of biological role, S-adenosyl-L-methionine-dependent transferase that acts as a component of the wybutosine biosynthesis pathway. Wybutosine is a hyper modified guanosine with a tricyclic base found at the 3'-position adjacent to the anticodon of eukaryotic phenylalanine tRNA. Catalyzes the transfer of the alpha-amino-alpha-carboxypropyl (acp) group from S-adenosyl-L-methionine to the C-7 position of 4-demethylwyosine (imG-14) to produce wybutosine-86. The chain is tRNA wybutosine-synthesizing protein 2 (TRM12) from Saccharomyces cerevisiae (strain ATCC 204508 / S288c) (Baker's yeast).